The following is a 322-amino-acid chain: MVPSLALVPGEPAGIGPELCIRLAQQPRSDAHLIAYADPDTLHSAAKALCLSVRLLDPDQHARLPGDLPLHPVRQAAPTRFGTPDPANAAAVIAGLLGAAGDCLSGKLQGIVTGPVHKAVINAGGIAYTGTTELLAAQAGCPVVMMLANSIVRVALVTTHLPLRAVPEAITAEALARCLRITATAMQRDFGLEHPRIAVLGLNPHAGEDGLLGREELDVIIPVLDQLRSEGMQLIGPLPADTAFLPQKLTDFDAVVAMYHDQGLPVLKYSGFEQAVNITLGLPYPRVAVDHGTALELAGRGVADPSSLLAATALCARLAARS.

Thr132 provides a ligand contact to substrate. 3 residues coordinate a divalent metal cation: His160, His205, and His260. Positions 268, 277, and 286 each coordinate substrate.

The protein belongs to the PdxA family. As to quaternary structure, homodimer. Requires Zn(2+) as cofactor. Mg(2+) serves as cofactor. It depends on Co(2+) as a cofactor.

The protein localises to the cytoplasm. It carries out the reaction 4-(phosphooxy)-L-threonine + NAD(+) = 3-amino-2-oxopropyl phosphate + CO2 + NADH. The protein operates within cofactor biosynthesis; pyridoxine 5'-phosphate biosynthesis; pyridoxine 5'-phosphate from D-erythrose 4-phosphate: step 4/5. Catalyzes the NAD(P)-dependent oxidation of 4-(phosphooxy)-L-threonine (HTP) into 2-amino-3-oxo-4-(phosphooxy)butyric acid which spontaneously decarboxylates to form 3-amino-2-oxopropyl phosphate (AHAP). In Xanthomonas campestris pv. campestris (strain 8004), this protein is 4-hydroxythreonine-4-phosphate dehydrogenase.